A 135-amino-acid chain; its full sequence is Endoribonuclease YbeY (135 aa).

Zn(2+) contacts are provided by His102, His106, and His112.

Belongs to the endoribonuclease YbeY family. Zn(2+) serves as cofactor.

It localises to the cytoplasm. Its function is as follows. Single strand-specific metallo-endoribonuclease involved in late-stage 70S ribosome quality control and in maturation of the 3' terminus of the 16S rRNA. This Rubrobacter xylanophilus (strain DSM 9941 / JCM 11954 / NBRC 16129 / PRD-1) protein is Endoribonuclease YbeY.